The sequence spans 72 residues: Translation initiation factor IF-1 (72 aa).

The region spanning 1-72 (MAKQSAIEQD…SKGRIVFRYK (72 aa)) is the S1-like domain.

Belongs to the IF-1 family. As to quaternary structure, component of the 30S ribosomal translation pre-initiation complex which assembles on the 30S ribosome in the order IF-2 and IF-3, IF-1 and N-formylmethionyl-tRNA(fMet); mRNA recruitment can occur at any time during PIC assembly.

It localises to the cytoplasm. In terms of biological role, one of the essential components for the initiation of protein synthesis. Stabilizes the binding of IF-2 and IF-3 on the 30S subunit to which N-formylmethionyl-tRNA(fMet) subsequently binds. Helps modulate mRNA selection, yielding the 30S pre-initiation complex (PIC). Upon addition of the 50S ribosomal subunit IF-1, IF-2 and IF-3 are released leaving the mature 70S translation initiation complex. This chain is Translation initiation factor IF-1, found in Bacteroides fragilis (strain ATCC 25285 / DSM 2151 / CCUG 4856 / JCM 11019 / LMG 10263 / NCTC 9343 / Onslow / VPI 2553 / EN-2).